The sequence spans 87 residues: Small ribosomal subunit protein bS20 (87 aa).

The interval 1–22 (MANSPQAKKRARQNEKRFAINK) is disordered.

Belongs to the bacterial ribosomal protein bS20 family.

Functionally, binds directly to 16S ribosomal RNA. This is Small ribosomal subunit protein bS20 from Ruegeria sp. (strain TM1040) (Silicibacter sp.).